A 180-amino-acid chain; its full sequence is MKPQIEVVVGDITTMEVDVIVNAANPSLMGGGGVDGAIHRAAGPQLLEACKTVRQQQGECAPGHAVITIAGDLPAKAVIHAVGPVWQGGENHEARTLQDAYLNCLRLAAANGYKTLAFPAISTGVYGYPKAAAAEIAVDTVSEFLTRKPLPERVYFVCYDEENAQLYQRLLIQRGLTPDA.

The Macro domain occupies 1-175; sequence MKPQIEVVVG…LYQRLLIQRG (175 aa). Residues 11-12, N25, 33-35, and 122-126 each bind substrate; these read DI, GVD, and STGVY. Catalysis depends on D35, which acts as the Proton acceptor.

The protein belongs to the MacroD-type family. YmdB subfamily. In terms of assembly, homodimer. Interacts with RNase III.

It carries out the reaction 3''-O-acetyl-ADP-D-ribose + H2O = ADP-D-ribose + acetate + H(+). The catalysed reaction is 2''-O-acetyl-ADP-D-ribose + H2O = ADP-D-ribose + acetate + H(+). In terms of biological role, deacetylates O-acetyl-ADP ribose to yield ADP-ribose and free acetate. Down-regulates ribonuclease 3 (RNase III) activity. Acts by interacting directly with the region of the ribonuclease that is required for dimerization/activation. This is O-acetyl-ADP-ribose deacetylase from Enterobacter sp. (strain 638).